We begin with the raw amino-acid sequence, 228 residues long: Protein N-lysine methyltransferase METTL21D (228 aa).

Ala-2 carries the N-acetylalanine modification. Residues Trp-43, 75–77, Asp-96, Trp-126, Ala-142, and Tyr-147 each bind S-adenosyl-L-methionine; that span reads GSG.

This sequence belongs to the methyltransferase superfamily. METTL21 family. As to quaternary structure, interacts with ALKBH6. Interacts with ASPSCR1 and UBXN6; interaction with ASPSCR1, but not with UBXN6, enhances VCP methylation. In terms of tissue distribution, widely expressed.

It localises to the cytoplasm. It catalyses the reaction L-lysyl-[protein] + 3 S-adenosyl-L-methionine = N(6),N(6),N(6)-trimethyl-L-lysyl-[protein] + 3 S-adenosyl-L-homocysteine + 3 H(+). Protein N-lysine methyltransferase that specifically trimethylates 'Lys-315' of VCP/p97; this modification may decrease VCP ATPase activity. The chain is Protein N-lysine methyltransferase METTL21D (Vcpkmt) from Mus musculus (Mouse).